The following is a 228-amino-acid chain: uncharacterized protein (228 aa).

This is an uncharacterized protein from Rickettsia prowazekii (strain Madrid E).